We begin with the raw amino-acid sequence, 436 residues long: UPF0597 protein YhaM (436 aa).

It belongs to the UPF0597 family.

This is UPF0597 protein YhaM from Salmonella choleraesuis (strain SC-B67).